The primary structure comprises 276 residues: Cerberus (276 aa).

The N-terminal stretch at 1 to 20 (MLLCVLKIYIIFCLVNDGAG) is a signal peptide. 3 N-linked (GlcNAc...) asparagine glycosylation sites follow: Asn103, Asn118, and Asn160. 4 disulfides stabilise this stretch: Cys175-Cys221, Cys189-Cys235, Cys199-Cys251, and Cys203-Cys253. One can recognise a CTCK domain in the interval 175-259 (CKTLPFTQNI…ECACEAHKNN (85 aa)). N-linked (GlcNAc...) asparagine glycosylation occurs at Asn234.

This sequence belongs to the DAN family. The long chain interacts with nodal/nr-1, bmp4 and wnt8, thereby inhibiting their function. The short chain interacts with nodal/nr-1 but not bmp4 or wnt8. As to expression, expressed in the anterior endomesoderm of the early gastrula with expression expanded laterally around the margin at the endoderm/mesoderm boundary.

It localises to the secreted. Functionally, inhibits wnt, nodal/nr-1 and bmp signaling in the embryo to promote head formation and anterior neural induction. Within the endoderm, acts as an essential mediator of nodal/nr-1-induced cardiogenesis in the overlying mesoderm. This is Cerberus from Xenopus tropicalis (Western clawed frog).